The sequence spans 237 residues: Methylthioribulose-1-phosphate dehydratase (237 aa).

A substrate-binding site is contributed by cysteine 98. Zn(2+) is bound by residues histidine 116 and histidine 118. Catalysis depends on glutamate 140, which acts as the Proton donor/acceptor. A Zn(2+)-binding site is contributed by histidine 196.

The protein belongs to the aldolase class II family. MtnB subfamily. Zn(2+) serves as cofactor.

It localises to the cytoplasm. The catalysed reaction is 5-(methylsulfanyl)-D-ribulose 1-phosphate = 5-methylsulfanyl-2,3-dioxopentyl phosphate + H2O. The protein operates within amino-acid biosynthesis; L-methionine biosynthesis via salvage pathway; L-methionine from S-methyl-5-thio-alpha-D-ribose 1-phosphate: step 2/6. Catalyzes the dehydration of methylthioribulose-1-phosphate (MTRu-1-P) into 2,3-diketo-5-methylthiopentyl-1-phosphate (DK-MTP-1-P). In Laccaria bicolor (strain S238N-H82 / ATCC MYA-4686) (Bicoloured deceiver), this protein is Methylthioribulose-1-phosphate dehydratase.